Reading from the N-terminus, the 225-residue chain is Cytidylate kinase (225 aa).

12–20 (GPSGAGKGT) provides a ligand contact to ATP.

The protein belongs to the cytidylate kinase family. Type 1 subfamily.

Its subcellular location is the cytoplasm. The catalysed reaction is CMP + ATP = CDP + ADP. It catalyses the reaction dCMP + ATP = dCDP + ADP. The protein is Cytidylate kinase of Edwardsiella ictaluri (strain 93-146).